Consider the following 276-residue polypeptide: Aliphatic sulfonates import ATP-binding protein SsuB 1 (276 aa).

The interval 1 to 21 is disordered; that stretch reads MSTGNVTTLRRPEAPPSLPAG. The ABC transporter domain occupies 39–259; it reads FSFRNVTKSF…RHGTPEFARL (221 aa). 71–78 is an ATP binding site; sequence GKSGCGKS.

It belongs to the ABC transporter superfamily. Aliphatic sulfonates importer (TC 3.A.1.17.2) family. As to quaternary structure, the complex is composed of two ATP-binding proteins (SsuB), two transmembrane proteins (SsuC) and a solute-binding protein (SsuA).

It is found in the cell inner membrane. It catalyses the reaction ATP + H2O + aliphatic sulfonate-[sulfonate-binding protein]Side 1 = ADP + phosphate + aliphatic sulfonateSide 2 + [sulfonate-binding protein]Side 1.. Part of the ABC transporter complex SsuABC involved in aliphatic sulfonates import. Responsible for energy coupling to the transport system. The chain is Aliphatic sulfonates import ATP-binding protein SsuB 1 from Agrobacterium fabrum (strain C58 / ATCC 33970) (Agrobacterium tumefaciens (strain C58)).